The primary structure comprises 602 residues: Aspartate--tRNA(Asp/Asn) ligase (602 aa).

Glutamate 175 contacts L-aspartate. Positions 199 to 202 (QIFK) are aspartate. Residue arginine 221 participates in L-aspartate binding. ATP-binding positions include 221 to 223 (RDE) and glutamine 230. Residue histidine 458 participates in L-aspartate binding. Position 492 (glutamate 492) interacts with ATP. Residue arginine 499 participates in L-aspartate binding. ATP is bound at residue 544–547 (GLDR).

The protein belongs to the class-II aminoacyl-tRNA synthetase family. Type 1 subfamily. As to quaternary structure, homodimer.

It is found in the cytoplasm. The enzyme catalyses tRNA(Asx) + L-aspartate + ATP = L-aspartyl-tRNA(Asx) + AMP + diphosphate. In terms of biological role, aspartyl-tRNA synthetase with relaxed tRNA specificity since it is able to aspartylate not only its cognate tRNA(Asp) but also tRNA(Asn). Reaction proceeds in two steps: L-aspartate is first activated by ATP to form Asp-AMP and then transferred to the acceptor end of tRNA(Asp/Asn). In Cupriavidus metallidurans (strain ATCC 43123 / DSM 2839 / NBRC 102507 / CH34) (Ralstonia metallidurans), this protein is Aspartate--tRNA(Asp/Asn) ligase.